Here is a 175-residue protein sequence, read N- to C-terminus: Inorganic pyrophosphatase (175 aa).

Substrate is bound by residues lysine 30, arginine 44, and tyrosine 56. Mg(2+) contacts are provided by aspartate 66, aspartate 71, and aspartate 103. Tyrosine 142 contacts substrate.

This sequence belongs to the PPase family. As to quaternary structure, homohexamer. The cofactor is Mg(2+).

It is found in the cytoplasm. The catalysed reaction is diphosphate + H2O = 2 phosphate + H(+). In terms of biological role, catalyzes the hydrolysis of inorganic pyrophosphate (PPi) forming two phosphate ions. The polypeptide is Inorganic pyrophosphatase (Ralstonia nicotianae (strain ATCC BAA-1114 / GMI1000) (Ralstonia solanacearum)).